An 83-amino-acid polypeptide reads, in one-letter code: Cytochrome b559 subunit alpha (83 aa).

A helical transmembrane segment spans residues 21–35 (VIHSITIPSLFIAGW). Histidine 23 lines the heme pocket.

It belongs to the PsbE/PsbF family. As to quaternary structure, heterodimer of an alpha subunit and a beta subunit. PSII is composed of 1 copy each of membrane proteins PsbA, PsbB, PsbC, PsbD, PsbE, PsbF, PsbH, PsbI, PsbJ, PsbK, PsbL, PsbM, PsbT, PsbX, PsbY, PsbZ, Psb30/Ycf12, at least 3 peripheral proteins of the oxygen-evolving complex and a large number of cofactors. It forms dimeric complexes. The cofactor is heme b.

It localises to the plastid. The protein resides in the chloroplast thylakoid membrane. This b-type cytochrome is tightly associated with the reaction center of photosystem II (PSII). PSII is a light-driven water:plastoquinone oxidoreductase that uses light energy to abstract electrons from H(2)O, generating O(2) and a proton gradient subsequently used for ATP formation. It consists of a core antenna complex that captures photons, and an electron transfer chain that converts photonic excitation into a charge separation. The protein is Cytochrome b559 subunit alpha of Physcomitrium patens (Spreading-leaved earth moss).